Consider the following 508-residue polypeptide: Lysine--tRNA ligase (508 aa).

Mg(2+)-binding residues include glutamate 416 and glutamate 423.

Belongs to the class-II aminoacyl-tRNA synthetase family. In terms of assembly, homodimer. It depends on Mg(2+) as a cofactor.

Its subcellular location is the cytoplasm. It carries out the reaction tRNA(Lys) + L-lysine + ATP = L-lysyl-tRNA(Lys) + AMP + diphosphate. The sequence is that of Lysine--tRNA ligase from Prochlorococcus marinus (strain MIT 9303).